The chain runs to 309 residues: Sulfate adenylyltransferase subunit 2 (309 aa).

It belongs to the PAPS reductase family. CysD subfamily. As to quaternary structure, heterodimer composed of CysD, the smaller subunit, and CysN.

The catalysed reaction is sulfate + ATP + H(+) = adenosine 5'-phosphosulfate + diphosphate. It functions in the pathway sulfur metabolism; hydrogen sulfide biosynthesis; sulfite from sulfate: step 1/3. With CysN forms the ATP sulfurylase (ATPS) that catalyzes the adenylation of sulfate producing adenosine 5'-phosphosulfate (APS) and diphosphate, the first enzymatic step in sulfur assimilation pathway. APS synthesis involves the formation of a high-energy phosphoric-sulfuric acid anhydride bond driven by GTP hydrolysis by CysN coupled to ATP hydrolysis by CysD. The polypeptide is Sulfate adenylyltransferase subunit 2 (Mycolicibacterium vanbaalenii (strain DSM 7251 / JCM 13017 / BCRC 16820 / KCTC 9966 / NRRL B-24157 / PYR-1) (Mycobacterium vanbaalenii)).